The following is a 366-amino-acid chain: Histidinol-phosphate aminotransferase 2 (366 aa).

Residues 1–21 form a disordered region; that stretch reads MQVKDQLSLLQPYKPGKSPEQ. The residue at position 222 (Lys222) is an N6-(pyridoxal phosphate)lysine.

The protein belongs to the class-II pyridoxal-phosphate-dependent aminotransferase family. Histidinol-phosphate aminotransferase subfamily. In terms of assembly, homodimer. It depends on pyridoxal 5'-phosphate as a cofactor.

The catalysed reaction is L-histidinol phosphate + 2-oxoglutarate = 3-(imidazol-4-yl)-2-oxopropyl phosphate + L-glutamate. Its pathway is amino-acid biosynthesis; L-histidine biosynthesis; L-histidine from 5-phospho-alpha-D-ribose 1-diphosphate: step 7/9. The sequence is that of Histidinol-phosphate aminotransferase 2 from Bacillus cereus (strain ZK / E33L).